We begin with the raw amino-acid sequence, 328 residues long: Hairy/enhancer-of-split related with YRPW motif-like protein (328 aa).

The tract at residues 1-57 (MKRPKEPSGSDGESDGPIDVGQEGQLSQMARPLSTPSSSQMQARKKHRGIIEKRRRD) is disordered. Over residues 24 to 42 (GQLSQMARPLSTPSSSQMQ) the composition is skewed to polar residues. The transcriptional repression and interaction with NCOR1 and SIN3A stretch occupies residues 42 to 111 (QARKKHRGII…GGTGFFDARA (70 aa)). The bHLH domain maps to 43–98 (ARKKHRGIIEKRRRDRINSSLSELRRLVPTAFEKQGSSKLEKAEVLQMTVDHLKML). Residues 116 to 153 (FRSIGFRECLTEVIRYLGVLEGPSSRADPVRIRLLSHL) form the Orange domain. Positions 239–308 (SRGASSTRRA…NSSSPGPAGR (70 aa)) are disordered. Residues 261–270 (APSSRAARSS) show a composition bias toward low complexity.

This sequence belongs to the HEY family. Self-associates. Interacts with GATA4, GATA6, HES1, HEY1 and HEY2. Interacts with HDAC1, NCOR1 and SIN3A.

The protein resides in the nucleus. In terms of biological role, downstream effector of Notch signaling which may be required for cardiovascular development. Transcriptional repressor which binds preferentially to the canonical E box sequence 5'-CACGTG-3'. Represses transcription by the cardiac transcriptional activators GATA4 and GATA6. The protein is Hairy/enhancer-of-split related with YRPW motif-like protein (HEYL) of Homo sapiens (Human).